We begin with the raw amino-acid sequence, 44 residues long: Photosystem I reaction center subunit IX (44 aa).

A helical transmembrane segment spans residues 7–27 (YLSTAPVLAISWLIFVAGLLI).

It belongs to the PsaJ family.

The protein resides in the plastid. The protein localises to the chloroplast thylakoid membrane. Functionally, may help in the organization of the PsaE and PsaF subunits. This chain is Photosystem I reaction center subunit IX, found in Larix decidua (European larch).